Consider the following 64-residue polypeptide: Large ribosomal subunit protein uL29 (64 aa).

This sequence belongs to the universal ribosomal protein uL29 family.

The protein is Large ribosomal subunit protein uL29 of Thiobacillus denitrificans (strain ATCC 25259 / T1).